The primary structure comprises 109 residues: Trafficking protein particle complex subunit 2-like protein (109 aa).

Belongs to the TRAPP small subunits family. Sedlin subfamily. As to quaternary structure, component of the multisubunit TRAPP (transport protein particle) complex, which includes at least TRAPPC2, TRAPPC2L, TRAPPC3, TRAPPC3L, TRAPPC4, TRAPPC5, TRAPPC8, TRAPPC9, TRAPPC10, TRAPPC11 and TRAPPC12. Interacts with the heterodimer TRAPPC3-TRAPPC6A.

It is found in the cytoplasm. It localises to the perinuclear region. Its subcellular location is the endoplasmic reticulum. The protein localises to the golgi apparatus. Its function is as follows. May play a role in vesicular transport from endoplasmic reticulum to Golgi. This Pongo abelii (Sumatran orangutan) protein is Trafficking protein particle complex subunit 2-like protein (TRAPPC2L).